We begin with the raw amino-acid sequence, 609 residues long: Serine/threonine-protein phosphatase 4 regulatory subunit 2 (609 aa).

Serine 68 is subject to Phosphoserine. Residues 175-569 (NNNGNADEGS…EEARVSPSAT (395 aa)) are disordered. The segment covering 183 to 194 (GSSPGAGSAGCA) has biased composition (low complexity). Residues 201–225 (RSDDNDQPKAKKAKLEIDGEERSEA) show a composition bias toward basic and acidic residues. Serine 223 and serine 226 each carry phosphoserine. Residues 233 to 244 (VATRVKNEKDEK) show a composition bias toward basic and acidic residues. Position 252 is a phosphoserine (serine 252). Over residues 258-270 (EIEEPDEEVDEAD) the composition is skewed to acidic residues. 2 stretches are compositionally biased toward basic and acidic residues: residues 310–351 (IEAE…KPDG) and 375–400 (EPVK…KQDD). Acidic residues predominate over residues 401–410 (IDSTETDDAP). A compositionally biased stretch (basic and acidic residues) spans 414 to 462 (KPAEEKIASSESKPKTKSEDDPEAETKKSQPEKTETEAAEKSVSDEKQA). Phosphothreonine is present on threonine 602. At serine 603 the chain carries Phosphoserine.

The protein belongs to the PPP4R2 family. Serine/threonine-protein phosphatase 4 (PP4) occurs in different assemblies of the catalytic and one or more regulatory subunits. Probably part of a PP4 PPP4C-PPP4R2-PPP4R3 complex containing Pp4-19C, PPP4R2r and flfl.

Regulatory subunit of serine/threonine-protein phosphatase 4 (PP4). The probable PP4 complex Pp4-19C-PPP4R2r-flfl (PPP4C-PPP4R2-PPP4R3) is required to prevent caspase induced cell death (in vitro). This Drosophila melanogaster (Fruit fly) protein is Serine/threonine-protein phosphatase 4 regulatory subunit 2 (PPP4R2r).